Reading from the N-terminus, the 413-residue chain is Probable short/branched chain specific acyl-CoA dehydrogenase (413 aa).

FAD is bound by residues 152-161 (FCLSESGSGS) and 186-188 (WIT). Residue Ser161 participates in substrate binding. Substrate is bound by residues Tyr208, Tyr262, and 270–273 (NEGR). FAD contacts are provided by residues Arg298, Gln309, and 366–370 (SMLGG). Glu393 (proton acceptor) is an active-site residue. 395-397 (TSN) is an FAD binding site.

The protein belongs to the acyl-CoA dehydrogenase family. In terms of assembly, homotetramer. The cofactor is FAD.

The catalysed reaction is 2-methylbutanoyl-CoA + oxidized [electron-transfer flavoprotein] + H(+) = (2E)-2-methylbut-2-enoyl-CoA + reduced [electron-transfer flavoprotein]. It functions in the pathway lipid metabolism; mitochondrial fatty acid beta-oxidation. It participates in amino-acid degradation; L-isoleucine degradation. In terms of biological role, probable short and branched chain specific acyl-CoA dehydrogenase that catalyzes the removal of one hydrogen from C-2 and C-3 of the fatty acyl-CoA thioester, resulting in the formation of trans-2-enoyl-CoA. The sequence is that of Probable short/branched chain specific acyl-CoA dehydrogenase (acadsb) from Dictyostelium discoideum (Social amoeba).